Here is a 60-residue protein sequence, read N- to C-terminus: Small ribosomal subunit protein bS21 (60 aa).

A disordered region spans residues Pro41 to Arg60. Basic residues predominate over residues Arg45–Arg60.

It belongs to the bacterial ribosomal protein bS21 family.

The polypeptide is Small ribosomal subunit protein bS21 (Gloeothece citriformis (strain PCC 7424) (Cyanothece sp. (strain PCC 7424))).